Reading from the N-terminus, the 279-residue chain is Phosphatidylglycerol--prolipoprotein diacylglyceryl transferase (279 aa).

Transmembrane regions (helical) follow at residues 14-34 (IAFS…ACAI), 62-82 (YFLW…ILIY), 106-126 (FVGI…IASY), 136-156 (LLIY…FGRI), 190-210 (PSQL…VMWA), 218-238 (GLLI…AEFY), and 252-272 (LSMG…ILLY). Arginine 155 contacts a 1,2-diacyl-sn-glycero-3-phospho-(1'-sn-glycerol).

Belongs to the Lgt family.

It is found in the cell inner membrane. The catalysed reaction is L-cysteinyl-[prolipoprotein] + a 1,2-diacyl-sn-glycero-3-phospho-(1'-sn-glycerol) = an S-1,2-diacyl-sn-glyceryl-L-cysteinyl-[prolipoprotein] + sn-glycerol 1-phosphate + H(+). Its pathway is protein modification; lipoprotein biosynthesis (diacylglyceryl transfer). In terms of biological role, catalyzes the transfer of the diacylglyceryl group from phosphatidylglycerol to the sulfhydryl group of the N-terminal cysteine of a prolipoprotein, the first step in the formation of mature lipoproteins. The polypeptide is Phosphatidylglycerol--prolipoprotein diacylglyceryl transferase (Helicobacter pylori (strain HPAG1)).